Here is a 559-residue protein sequence, read N- to C-terminus: Formate--tetrahydrofolate ligase (559 aa).

ATP is bound at residue 68-75 (TPAGEGKS).

The protein belongs to the formate--tetrahydrofolate ligase family.

The enzyme catalyses (6S)-5,6,7,8-tetrahydrofolate + formate + ATP = (6R)-10-formyltetrahydrofolate + ADP + phosphate. The protein operates within one-carbon metabolism; tetrahydrofolate interconversion. This is Formate--tetrahydrofolate ligase from Bacillus licheniformis (strain ATCC 14580 / DSM 13 / JCM 2505 / CCUG 7422 / NBRC 12200 / NCIMB 9375 / NCTC 10341 / NRRL NRS-1264 / Gibson 46).